A 156-amino-acid chain; its full sequence is MSRRHKAEKREINPDPKFGDLVVTKFMNAIMLDGKKSVAENIVYGAFDVVQGKSKQEPLTVFHSALDNIAPHVEVRSRRVGGATYQVPVDVRPERRQALAIRWLIAAARKRNETTMVDRLSGELLDASNNRGSAVKKREDTHKMADANRAFSHYRW.

It belongs to the universal ribosomal protein uS7 family. Part of the 30S ribosomal subunit. Contacts proteins S9 and S11.

Its function is as follows. One of the primary rRNA binding proteins, it binds directly to 16S rRNA where it nucleates assembly of the head domain of the 30S subunit. Is located at the subunit interface close to the decoding center, probably blocks exit of the E-site tRNA. The protein is Small ribosomal subunit protein uS7 of Rhizobium leguminosarum bv. trifolii (strain WSM2304).